The chain runs to 510 residues: Histidine ammonia-lyase (510 aa).

The segment at residues 143-145 (ASG) is a cross-link (5-imidazolinone (Ala-Gly)). A 2,3-didehydroalanine (Ser) modification is found at serine 144.

The protein belongs to the PAL/histidase family. Contains an active site 4-methylidene-imidazol-5-one (MIO), which is formed autocatalytically by cyclization and dehydration of residues Ala-Ser-Gly.

It is found in the cytoplasm. It carries out the reaction L-histidine = trans-urocanate + NH4(+). It participates in amino-acid degradation; L-histidine degradation into L-glutamate; N-formimidoyl-L-glutamate from L-histidine: step 1/3. The polypeptide is Histidine ammonia-lyase (Aliivibrio fischeri (strain ATCC 700601 / ES114) (Vibrio fischeri)).